The sequence spans 716 residues: Polyribonucleotide nucleotidyltransferase (716 aa).

Residues Asp493 and Asp499 each coordinate Mg(2+). The 60-residue stretch at 560–619 folds into the KH domain; sequence PRMITIKINPEKIRDVIGKGGSVIRALTEETGTTIDISDDGVVTIASTSSEGMAEAKKRI. The S1 motif domain occupies 629-697; it reads GQVYEGTVLK…EKGRVRLSAK (69 aa).

Belongs to the polyribonucleotide nucleotidyltransferase family. Mg(2+) is required as a cofactor.

It localises to the cytoplasm. The catalysed reaction is RNA(n+1) + phosphate = RNA(n) + a ribonucleoside 5'-diphosphate. In terms of biological role, involved in mRNA degradation. Catalyzes the phosphorolysis of single-stranded polyribonucleotides processively in the 3'- to 5'-direction. The chain is Polyribonucleotide nucleotidyltransferase from Paraburkholderia xenovorans (strain LB400).